We begin with the raw amino-acid sequence, 189 residues long: Group XIIA secretory phospholipase A2 (189 aa).

Positions 1-22 (MALLSRPALTLLLLLMAAVVRC) are cleaved as a signal peptide. Ca(2+) contacts are provided by Gly88, Pro90, and Phe92. Residue His110 is part of the active site. Residue Asp111 participates in Ca(2+) binding. Residue Asp125 is part of the active site.

The cofactor is Ca(2+). As to expression, abundantly expressed in heart, skeletal muscle, kidney, liver and pancreas.

It is found in the secreted. The protein localises to the cytoplasm. The catalysed reaction is a 1,2-diacyl-sn-glycero-3-phosphocholine + H2O = a 1-acyl-sn-glycero-3-phosphocholine + a fatty acid + H(+). Its function is as follows. PA2 catalyzes the calcium-dependent hydrolysis of the 2-acyl groups in 3-sn-phosphoglycerides. Does not exhibit detectable activity toward sn-2-arachidonoyl- or linoleoyl-phosphatidylcholine or -phosphatidylethanolamine. In Homo sapiens (Human), this protein is Group XIIA secretory phospholipase A2 (PLA2G12A).